Here is a 117-residue protein sequence, read N- to C-terminus: Large ribosomal subunit protein uL18 (117 aa).

It belongs to the universal ribosomal protein uL18 family. In terms of assembly, part of the 50S ribosomal subunit; part of the 5S rRNA/L5/L18/L25 subcomplex. Contacts the 5S and 23S rRNAs.

In terms of biological role, this is one of the proteins that bind and probably mediate the attachment of the 5S RNA into the large ribosomal subunit, where it forms part of the central protuberance. The polypeptide is Large ribosomal subunit protein uL18 (Nitrosococcus oceani (strain ATCC 19707 / BCRC 17464 / JCM 30415 / NCIMB 11848 / C-107)).